We begin with the raw amino-acid sequence, 322 residues long: Mycothiol acetyltransferase (322 aa).

N-acetyltransferase domains lie at 5 to 150 (SWLR…DPDD) and 160 to 322 (VTIR…PARG). E36 contacts 1D-myo-inositol 2-(L-cysteinylamino)-2-deoxy-alpha-D-glucopyranoside. Acetyl-CoA is bound by residues 79-81 (LVV) and 87-92 (RRGVGT). 3 residues coordinate 1D-myo-inositol 2-(L-cysteinylamino)-2-deoxy-alpha-D-glucopyranoside: E187, K226, and E252. 256–258 (VGV) contributes to the acetyl-CoA binding site. Residue Y290 participates in 1D-myo-inositol 2-(L-cysteinylamino)-2-deoxy-alpha-D-glucopyranoside binding. 295-300 (NARAVR) contacts acetyl-CoA.

It belongs to the acetyltransferase family. MshD subfamily. As to quaternary structure, monomer.

It catalyses the reaction 1D-myo-inositol 2-(L-cysteinylamino)-2-deoxy-alpha-D-glucopyranoside + acetyl-CoA = mycothiol + CoA + H(+). Catalyzes the transfer of acetyl from acetyl-CoA to desacetylmycothiol (Cys-GlcN-Ins) to form mycothiol. This chain is Mycothiol acetyltransferase, found in Parafrankia sp. (strain EAN1pec).